The sequence spans 85 residues: Large ribosomal subunit protein bL27 (85 aa).

A disordered region spans residues 1–20 (MAHKKAAGSSRNGRDSNPKM).

This sequence belongs to the bacterial ribosomal protein bL27 family.

In Psychrobacter arcticus (strain DSM 17307 / VKM B-2377 / 273-4), this protein is Large ribosomal subunit protein bL27.